Consider the following 334-residue polypeptide: Broad-range acid phosphatase DET1 (334 aa).

The Tele-phosphohistidine intermediate role is filled by histidine 32. Substrate contacts are provided by residues asparagine 38, 44-45 (NG), and arginine 108. Glutamate 126 serves as the catalytic Proton donor/acceptor. Substrate-binding positions include 168-171 (LNNT) and 195-205 (RVKDEPRIREQ). Serine 248 is subject to Phosphoserine.

It belongs to the phosphoglycerate mutase family.

It is found in the cytoplasm. Its subcellular location is the nucleus. Its function is as follows. Metal-independent, broad-range acid phosphatase. Involved, either directly or indirectly, in the bidirectional transport of sterols between the endoplasmic reticulum and the plasma membrane. The polypeptide is Broad-range acid phosphatase DET1 (DET1) (Saccharomyces cerevisiae (strain ATCC 204508 / S288c) (Baker's yeast)).